The primary structure comprises 573 residues: Urease subunit alpha 2 (573 aa).

The Urease domain occupies 135 to 573; the sequence is GGMDTHVHYI…ISLNQLYFFS (439 aa). Ni(2+) contacts are provided by His-140, His-142, and Lys-223. The residue at position 223 (Lys-223) is an N6-carboxylysine. Residue His-225 participates in substrate binding. Ni(2+) is bound by residues His-252 and His-278. The Proton donor role is filled by His-326. Asp-366 serves as a coordination point for Ni(2+).

The protein belongs to the metallo-dependent hydrolases superfamily. Urease alpha subunit family. Heterotrimer of UreA (gamma), UreB (beta) and UreC (alpha) subunits. Three heterotrimers associate to form the active enzyme. Requires Ni cation as cofactor. In terms of processing, carboxylation allows a single lysine to coordinate two nickel ions.

It is found in the cytoplasm. The catalysed reaction is urea + 2 H2O + H(+) = hydrogencarbonate + 2 NH4(+). Its pathway is nitrogen metabolism; urea degradation; CO(2) and NH(3) from urea (urease route): step 1/1. The sequence is that of Urease subunit alpha 2 from Brucella melitensis biotype 1 (strain ATCC 23456 / CCUG 17765 / NCTC 10094 / 16M).